The sequence spans 83 residues: Small ribosomal subunit protein bS16 (83 aa).

This sequence belongs to the bacterial ribosomal protein bS16 family.

This Thermosynechococcus vestitus (strain NIES-2133 / IAM M-273 / BP-1) protein is Small ribosomal subunit protein bS16.